The chain runs to 1157 residues: Voltage-dependent calcium channel subunit alpha-2/delta-2 (1157 aa).

The N-terminal stretch at 1–18 (MAVPARTCGASWPGPVRT) is a signal peptide. Residues 1–37 (MAVPARTCGASWPGPVRTARPWPGRGPRPCPDPRGPA) are disordered. At 19–1119 (ARPWPGRGPR…TEDTSDCGRG (1101 aa)) the chain is on the extracellular side. The span at 24–34 (GRGPRPCPDPR) shows a compositional bias: pro residues. Residue asparagine 205 is glycosylated (N-linked (GlcNAc...) asparagine). In terms of domain architecture, VWFA spans 294–472 (DMVIIVDVSG…INTQEYLDVL (179 aa)). Residues aspartate 300, serine 302, and serine 304 each coordinate a divalent metal cation. Residues 300-304 (DVSGS) carry the MIDAS-like motif motif. 6 N-linked (GlcNAc...) asparagine glycosylation sites follow: asparagine 389, asparagine 421, asparagine 510, asparagine 543, asparagine 627, and asparagine 864. Cysteine 446 and cysteine 1104 are joined by a disulfide. The region spanning 488–577 (WTNVYEDALG…KPQITNFREP (90 aa)) is the Cache domain. The helical transmembrane segment at 1120–1140 (ASFPPSLGVLVSLQLLLLLGL) threads the bilayer. Residues 1141–1157 (PPRPQPQIHSFTPSRRL) are Cytoplasmic-facing.

Belongs to the calcium channel subunit alpha-2/delta family. As to quaternary structure, dimer formed of alpha-2-2 and delta-2 chains; disulfide-linked. Voltage-dependent calcium channels are multisubunit complexes, consisting of alpha-1 (CACNA1), alpha-2 (CACNA2D), beta (CACNB) and delta (CACNA2D) subunits in a 1:1:1:1 ratio. In terms of processing, N-glycosylated. Post-translationally, may be proteolytically processed into subunits alpha-2-2 and delta-2 that are disulfide-linked. It is however unclear whether such cleavage really takes place in vivo and has a functional role. As to expression, in heart, it is highly expressed in atrium and at lower level in ventricle.

The protein localises to the membrane. The alpha-2/delta subunit of voltage-dependent calcium channels regulates calcium current density and activation/inactivation kinetics of the calcium channel. Acts as a regulatory subunit for P/Q-type calcium channel (CACNA1A), N-type (CACNA1B), L-type (CACNA1C OR CACNA1D) and possibly T-type (CACNA1G). Overexpression induces apoptosis. This is Voltage-dependent calcium channel subunit alpha-2/delta-2 (Cacna2d2) from Rattus norvegicus (Rat).